Here is a 240-residue protein sequence, read N- to C-terminus: Predicted GPI-anchored protein 58 (240 aa).

The first 18 residues, 1 to 18, serve as a signal peptide directing secretion; it reads MQFSTLVSLAAVIVSTNA. Positions 41–216 are disordered; sequence HTNCPASSPA…NSTGPSSVPT (176 aa). Residues 51–86 are compositionally biased toward pro residues; the sequence is TPAPAPSASAPAPPAPEQPEPSAPAPAPSAPAPEQP. Residues 87-103 are compositionally biased toward low complexity; sequence EQPATPATPAAPATPAT. 2 stretches are compositionally biased toward pro residues: residues 104 to 137 and 153 to 192; these read PAAP…PEQP and APAP…PAPS. Residues 193 to 216 show a composition bias toward low complexity; it reads APASVPEQPASSVSNSTGPSSVPT. An N-linked (GlcNAc...) asparagine glycan is attached at N207. The GPI-anchor amidated glycine moiety is linked to residue G219. Positions 220 to 240 are cleaved as a propeptide — removed in mature form; the sequence is AAAKQYITGSVAVIAAALLAL.

Its subcellular location is the cell membrane. This is Predicted GPI-anchored protein 58 (PGA58) from Candida albicans (strain SC5314 / ATCC MYA-2876) (Yeast).